We begin with the raw amino-acid sequence, 221 residues long: uncharacterized protein (221 aa).

This sequence to E.coli YheO.

This is an uncharacterized protein from Haemophilus influenzae (strain ATCC 51907 / DSM 11121 / KW20 / Rd).